The chain runs to 89 residues: Small ribosomal subunit protein uS15 (89 aa).

Belongs to the universal ribosomal protein uS15 family. In terms of assembly, part of the 30S ribosomal subunit. Forms a bridge to the 50S subunit in the 70S ribosome, contacting the 23S rRNA.

In terms of biological role, one of the primary rRNA binding proteins, it binds directly to 16S rRNA where it helps nucleate assembly of the platform of the 30S subunit by binding and bridging several RNA helices of the 16S rRNA. Forms an intersubunit bridge (bridge B4) with the 23S rRNA of the 50S subunit in the ribosome. The sequence is that of Small ribosomal subunit protein uS15 from Elusimicrobium minutum (strain Pei191).